The chain runs to 307 residues: Ribosomal RNA small subunit methyltransferase H (307 aa).

Residues 34–36 (GGH), Asp53, Leu88, Asp102, and Gln109 each bind S-adenosyl-L-methionine.

This sequence belongs to the methyltransferase superfamily. RsmH family.

The protein resides in the cytoplasm. It carries out the reaction cytidine(1402) in 16S rRNA + S-adenosyl-L-methionine = N(4)-methylcytidine(1402) in 16S rRNA + S-adenosyl-L-homocysteine + H(+). Specifically methylates the N4 position of cytidine in position 1402 (C1402) of 16S rRNA. The chain is Ribosomal RNA small subunit methyltransferase H from Sulfurimonas denitrificans (strain ATCC 33889 / DSM 1251) (Thiomicrospira denitrificans (strain ATCC 33889 / DSM 1251)).